The primary structure comprises 76 residues: Conotoxin Vc6.6 (76 aa).

The N-terminal stretch at 1–22 (MKLTCMVIVAVLFLTANTFVTA) is a signal peptide. The propeptide occupies 23 to 52 (VPHSSNALENLYLKAHHEMNNPKDSELNKR). Cystine bridges form between Cys-53–Cys-67, Cys-60–Cys-71, and Cys-66–Cys-75.

It belongs to the conotoxin O1 superfamily. In terms of tissue distribution, expressed by the venom duct.

The protein resides in the secreted. In Conus victoriae (Queen Victoria cone), this protein is Conotoxin Vc6.6.